The primary structure comprises 325 residues: SAM pointed domain-containing Ets transcription factor (325 aa).

2 disordered regions span residues 27-50 (GTEK…PPAT) and 79-100 (ARAG…SQAS). A PNT domain is found at 119–203 (EVLKDIETAC…AHLDIWKSAA (85 aa)). The ETS DNA-binding region spans 239 to 322 (IHLWQFLKEL…ISQRLVYQFV (84 aa)).

This sequence belongs to the ETS family. Interacts with the DNA-binding domain of the androgen receptor. Interacts with NKX3-1. In terms of tissue distribution, expressed in the accessory glands of sex organs including the prostate, seminal vesicle, coagulating gland in males, the oviduct in females, and in intestines. Expression is epithelial-specific.

The protein localises to the nucleus. In terms of biological role, may function as an androgen-independent transactivator of the prostate-specific antigen (PSA) promoter. Binds to 5'-GGAT-3' DNA sequences. May play a role in the regulation of the prostate gland and/or prostate cancer development. Acts as a transcriptional activator for SERPINB5 promoter. This Mus musculus (Mouse) protein is SAM pointed domain-containing Ets transcription factor (Spdef).